A 125-amino-acid polypeptide reads, in one-letter code: Aspartate 1-decarboxylase (125 aa).

The active-site Schiff-base intermediate with substrate; via pyruvic acid is the Ser25. Position 25 is a pyruvic acid (Ser) (Ser25). Substrate is bound at residue Thr57. Tyr58 functions as the Proton donor in the catalytic mechanism. 73-75 (GAA) contributes to the substrate binding site.

This sequence belongs to the PanD family. In terms of assembly, heterooctamer of four alpha and four beta subunits. Pyruvate is required as a cofactor. In terms of processing, is synthesized initially as an inactive proenzyme, which is activated by self-cleavage at a specific serine bond to produce a beta-subunit with a hydroxyl group at its C-terminus and an alpha-subunit with a pyruvoyl group at its N-terminus.

The protein localises to the cytoplasm. The catalysed reaction is L-aspartate + H(+) = beta-alanine + CO2. The protein operates within cofactor biosynthesis; (R)-pantothenate biosynthesis; beta-alanine from L-aspartate: step 1/1. Its function is as follows. Catalyzes the pyruvoyl-dependent decarboxylation of aspartate to produce beta-alanine. The sequence is that of Aspartate 1-decarboxylase from Herpetosiphon aurantiacus (strain ATCC 23779 / DSM 785 / 114-95).